A 119-amino-acid chain; its full sequence is Beta-2-microglobulin (119 aa).

The signal sequence occupies residues methionine 1–alanine 20. Positions proline 25–lysine 114 constitute an Ig-like C1-type domain. A disulfide bridge links cysteine 45 with cysteine 100.

The protein belongs to the beta-2-microglobulin family. As to quaternary structure, heterodimer of an alpha chain and a beta chain. Beta-2-microglobulin is the beta-chain of major histocompatibility complex class I molecules.

Its subcellular location is the secreted. Its function is as follows. Component of the class I major histocompatibility complex (MHC). Involved in the presentation of peptide antigens to the immune system. This is Beta-2-microglobulin (B2M) from Cheracebus torquatus (Collared titi monkey).